A 147-amino-acid polypeptide reads, in one-letter code: Protein disulfide isomerase-like 5-1 (147 aa).

The N-terminal stretch at 1 to 29 is a signal peptide; that stretch reads MDLAPGRRARLLVALALVVLVALAARSGA. One can recognise a Thioredoxin domain in the interval 30 to 137; the sequence is EVITLTEETF…LKNFVSDEAE (108 aa). Residues C59 and C62 each act as nucleophile in the active site. C59 and C62 are disulfide-bonded.

This sequence belongs to the protein disulfide isomerase family.

Functionally, acts as a protein-folding catalyst that interacts with nascent polypeptides to catalyze the formation, isomerization, and reduction or oxidation of disulfide bonds. May play a role in storage protein biogenesis. The polypeptide is Protein disulfide isomerase-like 5-1 (PDIL5-1) (Oryza sativa subsp. japonica (Rice)).